Reading from the N-terminus, the 101-residue chain is Small ribosomal subunit protein uS14 (101 aa).

This sequence belongs to the universal ribosomal protein uS14 family. In terms of assembly, part of the 30S ribosomal subunit. Contacts proteins S3 and S10.

Functionally, binds 16S rRNA, required for the assembly of 30S particles and may also be responsible for determining the conformation of the 16S rRNA at the A site. The protein is Small ribosomal subunit protein uS14 of Chromohalobacter salexigens (strain ATCC BAA-138 / DSM 3043 / CIP 106854 / NCIMB 13768 / 1H11).